An 85-amino-acid chain; its full sequence is F1845 adhesin operon regulatory protein (85 aa).

Functionally, regulates the transcription of genes involved in the biosynthesis of F1845 fimbrial adhesin. The sequence is that of F1845 adhesin operon regulatory protein (daaA) from Escherichia coli.